The primary structure comprises 133 residues: Glycophorin-A (133 aa).

O-linked (GalNAc...) threonine glycans are attached at residues Thr1 and Thr6. The tract at residues 1 to 34 is disordered; it reads TETPVTGEQGSATPGNVSNATVTAGKPSATSPGV. Residues 1-62 are Extracellular-facing; it reads TETPVTGEQG…SYHQDFSHAE (62 aa). An O-linked (GalNAc...) serine glycan is attached at Ser11. O-linked (GalNAc...) threonine glycosylation is present at Thr13. The N-linked (GlcNAc...) asparagine glycan is linked to Asn19. 3 O-linked (GalNAc...) threonine glycosylation sites follow: Thr21, Thr23, and Thr30. An O-linked (GalNAc...) serine glycan is attached at Ser31. A glycan (N-linked (GlcNAc...) asparagine) is linked at Asn39. O-linked (GalNAc...) threonine glycosylation is found at Thr41 and Thr48. A helical membrane pass occupies residues 63–85; the sequence is ITGIIFAVMAGLLLIIFLIAYLI. Residues 86 to 133 are Cytoplasmic-facing; it reads RRMIKKPLPVPKPQDSPDIGTENTADPSELQDTEDPPLTSVEIETPAS. Residues 93–133 form a disordered region; that stretch reads LPVPKPQDSPDIGTENTADPSELQDTEDPPLTSVEIETPAS.

The protein belongs to the glycophorin-A family. Homodimer. Component of the ankyrin-1 complex in the erythrocyte, composed of ANK1, RHCE, RHAG, SLC4A1, EPB42, GYPA, GYPB and AQP1. Interacts with SLC4A1; a GYPA monomer is bound at each end of the SLC4A1 dimer forming a heterotetramer.

Its subcellular location is the membrane. In terms of biological role, component of the ankyrin-1 complex, a multiprotein complex involved in the stability and shape of the erythrocyte membrane. Glycophorin A is the major intrinsic membrane protein of the erythrocyte. The N-terminal glycosylated segment, which lies outside the erythrocyte membrane, has MN blood group receptors. Appears to be important for the function of SLC4A1 and is required for high activity of SLC4A1. May be involved in translocation of SLC4A1 to the plasma membrane. This Sus scrofa (Pig) protein is Glycophorin-A.